We begin with the raw amino-acid sequence, 315 residues long: Leukocidin-S subunit (315 aa).

Positions 1–29 (MLKNKILATTLSVSLLAPLANPLLENAKA) are cleaved as a signal peptide.

Belongs to the aerolysin family. Leukocidin consists of two protein components: F and S.

Its function is as follows. Leukocidin causes cytotoxic changes in polymorphonuclear leukocytes. The protein is Leukocidin-S subunit (lukS) of Staphylococcus aureus.